Reading from the N-terminus, the 932-residue chain is AP-3 complex subunit delta (932 aa).

T2 bears the N-acetylthreonine mark. 12 HEAT repeats span residues S157–E194, L196–Q231, F233–K269, L270–D307, E310–T346, D347–L384, A386–K425, K427–D466, V490–E527, N528–N564, K570–V601, and E602–L638. Phosphoserine is present on residues S700 and S727. A disordered region spans residues E720–E868. Composition is skewed to basic and acidic residues over residues E738–L747 and S755–R766. At T767 the chain carries Phosphothreonine. The segment covering T767–T779 has biased composition (low complexity). Residues S770 and S773 each carry the phosphoserine modification. Residues R783–R793 show a composition bias toward basic residues. S798 is subject to Phosphoserine. The span at A806–N832 shows a compositional bias: basic and acidic residues. Polar residues predominate over residues Q838–R855. Residues S857–E868 are compositionally biased toward basic and acidic residues. Residues Q858 to L878 adopt a coiled-coil conformation. S888 carries the post-translational modification Phosphoserine. Positions K897 to A915 are enriched in basic residues. A disordered region spans residues K897–I932. Residue S918 is modified to Phosphoserine. Positions E923–I932 are enriched in basic and acidic residues.

Belongs to the adaptor complexes large subunit family. In terms of assembly, adaptor protein complex 3 (AP-3) is a heterotetramer composed of 2 large adaptins (APL5 and APL6), a medium adaptin (APM3) and a small adaptin (APS3). Interacts with VPS41.

It is found in the golgi apparatus. Its subcellular location is the cytoplasmic vesicle. The protein localises to the clathrin-coated vesicle membrane. Its function is as follows. Part of the AP-3 complex, an adaptor-related complex which is not clathrin-associated. The complex is associated with the Golgi region as well as more peripheral structures. It facilitates the budding of vesicles from the Golgi membrane and may be directly involved in trafficking to the vacuole. Required for the transport via the ALP pathway, which directs the transport of the cargo proteins PHO8 and VAM3 to the vacuole. The sequence is that of AP-3 complex subunit delta (APL5) from Saccharomyces cerevisiae (strain ATCC 204508 / S288c) (Baker's yeast).